A 214-amino-acid chain; its full sequence is Large ribosomal subunit protein uL29m (214 aa).

This sequence belongs to the universal ribosomal protein uL29 family. Component of the mitochondrial large ribosomal subunit. Mature mitochondrial ribosomes consist of a small (37S) and a large (54S) subunit. The 37S subunit contains at least 33 different proteins and 1 molecule of RNA (15S). The 54S subunit contains at least 45 different proteins and 1 molecule of RNA (21S).

It localises to the mitochondrion. The polypeptide is Large ribosomal subunit protein uL29m (mrpl4) (Aspergillus terreus (strain NIH 2624 / FGSC A1156)).